Reading from the N-terminus, the 358-residue chain is Nicotinate-nucleotide--dimethylbenzimidazole phosphoribosyltransferase (358 aa).

Catalysis depends on glutamate 314, which acts as the Proton acceptor.

It belongs to the CobT family.

The catalysed reaction is 5,6-dimethylbenzimidazole + nicotinate beta-D-ribonucleotide = alpha-ribazole 5'-phosphate + nicotinate + H(+). It participates in nucleoside biosynthesis; alpha-ribazole biosynthesis; alpha-ribazole from 5,6-dimethylbenzimidazole: step 1/2. Its function is as follows. Catalyzes the synthesis of alpha-ribazole-5'-phosphate from nicotinate mononucleotide (NAMN) and 5,6-dimethylbenzimidazole (DMB). The polypeptide is Nicotinate-nucleotide--dimethylbenzimidazole phosphoribosyltransferase (Mycobacterium marinum (strain ATCC BAA-535 / M)).